The following is an 87-amino-acid chain: MADSEDTSVILQGIDTINSVEGLEEDGYLSDEDTSLSNELADAQRQWEESLQQLNKLLNWVLLPLLGKYIGRRMAKTLWSRFIEHFV.

At 1 to 53 (MADSEDTSVILQGIDTINSVEGLEEDGYLSDEDTSLSNELADAQRQWEESLQQ) the chain is on the cytoplasmic side. Residues 54 to 71 (LNKLLNWVLLPLLGKYIG) form a helical membrane-spanning segment. Topologically, residues 72 to 87 (RRMAKTLWSRFIEHFV) are mitochondrial intermembrane.

This sequence belongs to the MIM2 family. As to quaternary structure, component of the MIM complex containing at least MIM1 and MIM2. Interacts with MIM1; interaction is direct.

It is found in the mitochondrion outer membrane. In terms of biological role, component of the MIM complex required for outer membrane protein import. Involved in import of the subset of proteins with multiple alpha-helical transmembrane segments, including UGO1, TOM20 and FZO1. This is Mitochondrial import protein 2 from Saccharomyces cerevisiae (strain ATCC 204508 / S288c) (Baker's yeast).